Reading from the N-terminus, the 475-residue chain is Ubiquitin carboxyl-terminal hydrolase calypso (475 aa).

The 232-residue stretch at 44 to 275 (GWLELESDPG…IRFNLMAVVP (232 aa)) folds into the UCH catalytic domain. The active-site Nucleophile is Cys-130. His-212 acts as the Proton donor in catalysis. Residues 333–360 (AKDLQLLLKNLDTEIAINEQNLADENDR) are a coiled coil. In terms of domain architecture, ULD spans 374-402 (NYDKFICTFLSMLAHQGVLGELVSQHLLP). The tract at residues 404-475 (KKVSGQSAAN…KGRNKCRKRK (72 aa)) is positively charged C-terminal tail required for binding nucleosomes. The segment at 411-475 (AANRISKQNS…KGRNKCRKRK (65 aa)) is disordered. Positions 419–460 (NSAASSAGANAGAAAGVTPKSQQQQQQPQTAASKNGKSPGKT) are enriched in low complexity. Over residues 461–475 (PGRRRKGRNKCRKRK) the composition is skewed to basic residues.

This sequence belongs to the peptidase C12 family. BAP1 subfamily. Catalytic component of the polycomb repressive deubiquitinase (PR-DUB) complex, at least composed of caly/calypso, Asx and sba (MBD5/6 homolog). The PR-DUB complex associates with nucleosomes to mediate deubiquitination of histone H2AK118ub1 substrates; the association requires the positively charged C-terminal tail of caly, probably due to direct binding of DNA. Interacts (via ULD domain) with Asx (via DEUBAD domain); the interaction produces a stable heterodimer with a composite binding site for ubiquitin. Homodimerizes (via coiled-coil hinge-region between the UCH and ULD domains) to mediate assembly of 2 copies of the caly-Asx heterodimer into a bisymmetric tetramer; dimerization enhances PR-DUB association with nucleosomes.

The protein localises to the nucleus. It catalyses the reaction Thiol-dependent hydrolysis of ester, thioester, amide, peptide and isopeptide bonds formed by the C-terminal Gly of ubiquitin (a 76-residue protein attached to proteins as an intracellular targeting signal).. In terms of biological role, catalytic component of the polycomb repressive deubiquitinase (PR-DUB) complex, a complex that specifically mediates deubiquitination of histone H2A monoubiquitinated at 'Lys-119' (H2AK118ub1). Mediates bisymmetric organization of the PR-DUB complex and is involved in association with nucleosomes to mediate deubiquitination. Does not deubiquitinate monoubiquitinated histone H2B. Required to maintain the transcriptionally repressive state of homeotic genes throughout development. The PR-DUB complex has weak or no activity toward 'Lys-48'- and 'Lys-63'-linked polyubiquitin chains. Polycomb group (PcG) protein. The chain is Ubiquitin carboxyl-terminal hydrolase calypso from Drosophila persimilis (Fruit fly).